We begin with the raw amino-acid sequence, 226 residues long: Enolase-phosphatase E1 (226 aa).

This sequence belongs to the HAD-like hydrolase superfamily. MasA/MtnC family. As to quaternary structure, monomer. Mg(2+) serves as cofactor.

It carries out the reaction 5-methylsulfanyl-2,3-dioxopentyl phosphate + H2O = 1,2-dihydroxy-5-(methylsulfanyl)pent-1-en-3-one + phosphate. It participates in amino-acid biosynthesis; L-methionine biosynthesis via salvage pathway; L-methionine from S-methyl-5-thio-alpha-D-ribose 1-phosphate: step 3/6. The protein operates within amino-acid biosynthesis; L-methionine biosynthesis via salvage pathway; L-methionine from S-methyl-5-thio-alpha-D-ribose 1-phosphate: step 4/6. Its function is as follows. Bifunctional enzyme that catalyzes the enolization of 2,3-diketo-5-methylthiopentyl-1-phosphate (DK-MTP-1-P) into the intermediate 2-hydroxy-3-keto-5-methylthiopentenyl-1-phosphate (HK-MTPenyl-1-P), which is then dephosphorylated to form the acireductone 1,2-dihydroxy-3-keto-5-methylthiopentene (DHK-MTPene). This chain is Enolase-phosphatase E1, found in Shewanella amazonensis (strain ATCC BAA-1098 / SB2B).